Here is a 222-residue protein sequence, read N- to C-terminus: Peptidyl-prolyl cis-trans isomerase FKBP7 (222 aa).

A signal peptide spans 1-23 (MPKTMHFLFRFIVFFYLWGLFTA). N-linked (GlcNAc...) asparagine glycosylation is present at Asn-45. Residues 53-145 (GDLLNAHYDG…IFEIELYAVT (93 aa)) enclose the PPIase FKBP-type domain. EF-hand domains follow at residues 145-180 (TKGP…EFEK) and 189-222 (YQDA…HDEL). Residues Asp-158, Asp-160, Asp-162, Gln-164, Glu-169, Asp-202, Asp-204, Asp-206, and Glu-213 each coordinate Ca(2+). Residues 200–222 (KNDHDGDGFISPKEYNVYQHDEL) form a disordered region. Positions 219–222 (HDEL) match the Retention in the endoplasmic reticulum motif.

Post-translationally, glycosylated.

It localises to the endoplasmic reticulum lumen. The catalysed reaction is [protein]-peptidylproline (omega=180) = [protein]-peptidylproline (omega=0). Its function is as follows. PPIases accelerate the folding of proteins during protein synthesis. The chain is Peptidyl-prolyl cis-trans isomerase FKBP7 (FKBP7) from Homo sapiens (Human).